A 337-amino-acid chain; its full sequence is BRI1 kinase inhibitor 1 (337 aa).

The span at 1–25 (METNLQQVKNSSQTFSEKQNPKQEA) shows a compositional bias: polar residues. 2 disordered regions span residues 1–38 (METNLQQVKNSSQTFSEKQNPKQEASPSPISSTCSSPS) and 51–72 (SSSSKHISPTLRSPSKTTSSYQ). The segment covering 26-38 (SPSPISSTCSSPS) has biased composition (low complexity). Y211 carries the phosphotyrosine modification. Residues 270–310 (SAPASMRTSPTNSGHLRVSTAGLSSSSGSTSSSSSDSTMEE) are disordered. Over residues 288–310 (STAGLSSSSGSTSSSSSDSTMEE) the composition is skewed to low complexity.

In terms of assembly, interacts (via C-terminus) with BRI1 (via kinase domain). Phosphorylated on Tyr-211 in response to brassinosteroid perception, leading to its inactivation: once phosphorylated, displaced into the cytosol where it is inactive. As to expression, expressed in leaves, petioles, shoot apices, hypocotyls, roots and flowers.

It is found in the cell membrane. Its subcellular location is the cytoplasm. Functionally, negative regulator of brassinosteroid signaling. When associated to the membrane, limits the interaction of BRI1 with BAK1 by binding to the kinase-inactive form of BRI1. In Arabidopsis thaliana (Mouse-ear cress), this protein is BRI1 kinase inhibitor 1 (BKI1).